A 399-amino-acid polypeptide reads, in one-letter code: Tyrosine--tRNA ligase (399 aa).

Positions 42-51 (PTAPDLHLGH) match the 'HIGH' region motif. Positions 226 to 230 (KMSKS) match the 'KMSKS' region motif. Lysine 229 is a binding site for ATP. The 61-residue stretch at 336–396 (MPIAAVLNKA…GKKAFARITL (61 aa)) folds into the S4 RNA-binding domain.

The protein belongs to the class-I aminoacyl-tRNA synthetase family. TyrS type 2 subfamily. As to quaternary structure, homodimer.

The protein localises to the cytoplasm. It carries out the reaction tRNA(Tyr) + L-tyrosine + ATP = L-tyrosyl-tRNA(Tyr) + AMP + diphosphate + H(+). Its function is as follows. Catalyzes the attachment of tyrosine to tRNA(Tyr) in a two-step reaction: tyrosine is first activated by ATP to form Tyr-AMP and then transferred to the acceptor end of tRNA(Tyr). This chain is Tyrosine--tRNA ligase, found in Pseudomonas fluorescens (strain Pf0-1).